We begin with the raw amino-acid sequence, 248 residues long: Probable transcriptional regulatory protein FTL_0929 (248 aa).

The protein belongs to the TACO1 family.

Its subcellular location is the cytoplasm. The protein is Probable transcriptional regulatory protein FTL_0929 of Francisella tularensis subsp. holarctica (strain LVS).